A 770-amino-acid polypeptide reads, in one-letter code: Signal transducer and activator of transcription 3 (770 aa).

A2 is subject to N-acetylalanine. N6-acetyllysine is present on residues K49 and K87. Residues D150 to M162 carry the Essential for nuclear import motif. Residues W580–L670 enclose the SH2 domain. Residues K601, K615, and K631 each carry the allysine; alternate modification. N6-acetyllysine; alternate occurs at positions 601, 615, and 631. Y640 is subject to Phosphotyrosine; by TYK2. K685 is subject to Allysine; alternate. Residue K685 is modified to N6-acetyllysine; alternate. P704 is subject to Phosphotyrosine. Y705 bears the Phosphotyrosine; by FER and PTK6 mark. K707 bears the N6-acetyllysine mark. T714 is modified (phosphothreonine). The residue at position 727 (S727) is a Phosphoserine; by DYRK2, NLK, NEK6, IRAK1, RPS6KA5, ZIPK/DAPK3 and PKC/PRKCE.

It belongs to the transcription factor STAT family. In terms of assembly, forms a homodimer or a heterodimer with a related family member (at least STAT1). Component of a promoter-binding complex composed of STAT3, NFATC3 and NFATC4; complex formation is enhanced by calcineurin. Interacts with IL31RA, NCOA1, PELP1, SIPAR, SOCS7, STATIP1 and TMF1. Interacts with IL23R in presence of IL23. Interacts (via SH2 domain) with NLK. Interacts with ARL2BP; the interaction is enhanced by LIF and JAK1 expression. Interacts with KPNA4 and KPNA5; KPNA4 may be the primary mediator of nuclear import. Interacts with CAV2; the interaction is increased on insulin-induced tyrosine phosphorylation of CAV2 and leads to STAT3 activation. Interacts with ARL2BP; interaction is enhanced with ARL2. Interacts with NEK6. Binds to CDK9 when activated and nuclear. Interacts with BMX. Interacts with ZIPK/DAPK3. Interacts with PIAS3; the interaction occurs on stimulation by IL6, CNTF or OSM and inhibits the DNA binding activity of STAT3. In prostate cancer cells, interacts with PRKCE and promotes DNA binding activity of STAT3. Interacts with STMN3, antagonizing its microtubule-destabilizing activity. Interacts with the 'Lys-129' acetylated form of BIRC5/survivin. Interacts with FER. Interacts (via SH2 domain) with EIF2AK2/PKR (via the kinase catalytic domain). Interacts with INPP5F; the interaction is independent of STAT3 Tyr-705 phosphorylation status. Interacts with FGFR4. Interacts with OCIAD1. Interacts with OCIAD2. Interacts (unphosphorylated or phosphorylated at Ser-727) with PHB1. Interacts and may form heterodimers with NHLH1. Found in a complex with SLC39A6, SLC39A10 and with the 'Ser-727' phosphorylated form of STAT3 throughout mitosis. Interacts (when phosphorylated at Tyr-705) with CD274/PD-L1; promoting nuclear translocation of CD274/PD-L1. Interacts (when acetylated) with EP300 (via bromo domain); interaction takes place following STAT3 acetylation by EP300 and promotes enhanceosome assembly. Interacts (when acetylated) with BRD2 (via bromo domain); interaction promotes STAT3 recruitment to chromatin and T-helper Th17 cell differentiation. Interacts with FAM220A/SIPAR; the interaction occurs in both the nucleus and the cytoplasm, is enhanced by IL6 and promotes STAT3 dephosphorylation. Interacts in both unphosphorylated and phosphorylated forms with FAM220A but interacts preferentially in the phosphorylated form in the nucleus. Interacts with PTPN2; the interaction is promoted by FAM220A and leads to STAT3 dephosphorylation which negatively regulates STAT3 transcriptional activator activity. As to quaternary structure, (Microbial infection) Interacts with HCV core protein. (Microbial infection) Interacts with S.typhimurium SarA. In terms of assembly, (Microbial infection) Interacts with human cytomegalovirus (HHV-5) immediate early protein IE1; this interaction leads to STAT3 nuclear accumulation and disruption of IL6-induced STAT3 phosphorylation. In terms of processing, tyrosine phosphorylated upon stimulation with EGF. Tyrosine phosphorylated in response to constitutively activated FGFR1, FGFR2, FGFR3 and FGFR4. Activated through tyrosine phosphorylation by BMX. Tyrosine phosphorylated in response to IL6, IL11, LIF, CNTF, KITLG/SCF, CSF1, EGF, PDGF, IFN-alpha, LEP and OSM. Activated KIT promotes phosphorylation on tyrosine residues and subsequent translocation to the nucleus. Phosphorylated on serine upon DNA damage, probably by ATM or ATR. Serine phosphorylation is important for the formation of stable DNA-binding STAT3 homodimers and maximal transcriptional activity. ARL2BP may participate in keeping the phosphorylated state of STAT3 within the nucleus. Upon LPS challenge, phosphorylated within the nucleus by IRAK1. Upon erythropoietin treatment, phosphorylated on Ser-727 by RPS6KA5. Dephosphorylation on tyrosine residues by PTPN2 negatively regulates IL6/interleukin-6 signaling. Phosphorylation at Tyr-705 by PTK6, isoform M2 of PKM (PKM2) or FER leads to an increase of its transcriptional activity. Phosphorylation at Tyr-705 is increased in the presence of calcineurin. Phosphorylation at Tyr-640 by TYK2 negatively regulates transcriptional activity. Post-translationally, acetylated on lysine residues by EP300/p300, promoting its activation. Acetylation at Lys-49 and Lys-87 by EP300/p300 promotes its activation. Acetylation at Lys-87 by EP300/p300 promotes its association with BRD2 and recruitment to chromatin. Deacetylated at Lys-49 and Lys-87 by HDAC1. Acetylation at Lys-685 by EP300/p300 promotes its homodimerization and activation. Deacetylated at Lys-685 by HDAC3. Acetylated on lysine residues by CREBBP. Deacetylation by LOXL3 leads to disrupt STAT3 dimerization and inhibit STAT3 transcription activity. Oxidation of lysine residues to allysine on STAT3 preferentially takes place on lysine residues that are acetylated. Some lysine residues are oxidized to allysine by LOXL3, leading to disrupt STAT3 dimerization and inhibit STAT3 transcription activity. Oxidation of lysine residues to allysine on STAT3 preferentially takes place on lysine residues that are acetylated. In terms of processing, (Microbial infection) Phosphorylated on Tyr-705 in the presence of S.typhimurium SarA. As to expression, heart, brain, placenta, lung, liver, skeletal muscle, kidney and pancreas. Expressed in naive CD4(+) T cells as well as T-helper Th17, Th1 and Th2 cells.

Its subcellular location is the cytoplasm. It localises to the nucleus. Functionally, signal transducer and transcription activator that mediates cellular responses to interleukins, KITLG/SCF, LEP and other growth factors. Once activated, recruits coactivators, such as NCOA1 or MED1, to the promoter region of the target gene. May mediate cellular responses to activated FGFR1, FGFR2, FGFR3 and FGFR4. Upon activation of IL6ST/gp130 signaling by interleukin-6 (IL6), binds to the IL6-responsive elements identified in the promoters of various acute-phase protein genes. Activated by IL31 through IL31RA. Acts as a regulator of inflammatory response by regulating differentiation of naive CD4(+) T-cells into T-helper Th17 or regulatory T-cells (Treg): acetylation promotes its transcription activity and cell differentiation while deacetylation and oxidation of lysine residues by LOXL3 inhibits differentiation. Involved in cell cycle regulation by inducing the expression of key genes for the progression from G1 to S phase, such as CCND1. Mediates the effects of LEP on melanocortin production, body energy homeostasis and lactation. May play an apoptotic role by transctivating BIRC5 expression under LEP activation. Cytoplasmic STAT3 represses macroautophagy by inhibiting EIF2AK2/PKR activity. Plays a crucial role in basal beta cell functions, such as regulation of insulin secretion. Following JAK/STAT signaling activation and as part of a complex with NFATC3 and NFATC4, binds to the alpha-beta E4 promoter region of CRYAB and activates transcription in cardiomyocytes. The protein is Signal transducer and activator of transcription 3 of Homo sapiens (Human).